The following is a 392-amino-acid chain: SH3 domain-binding protein 5-like (392 aa).

The tract at residues 1 to 57 (MADLKKAAGGRETPQGELRSEVVEDEGPRSPVAEEPGGSGSNSSETKLSPREEEELD) is disordered. Thr-13 carries the phosphothreonine modification. The segment covering 18-28 (LRSEVVEDEGP) has biased composition (basic and acidic residues). Ser-30 and Ser-49 each carry phosphoserine. 2 coiled-coil regions span residues 59–140 (RIQE…YERA) and 169–272 (WQEM…EQIH). Residues 275–332 (RRGLPPHPLGPRRSSPVGAEAGPEGIEDGDSGIEGAEGGGLEEGSSLGPGPGPDTDTL) are disordered. The span at 317-332 (EGSSLGPGPGPDTDTL) shows a compositional bias: low complexity. Phosphoserine occurs at positions 342, 349, 357, 361, and 377. Residues 364 to 392 (GQELGAQSRGRRGSDIGVRGGRHQRSVSL) form a disordered region. Residues 383–392 (GGRHQRSVSL) are compositionally biased toward basic residues.

Belongs to the SH3BP5 family.

In terms of biological role, functions as a guanine nucleotide exchange factor (GEF) for RAB11A. The chain is SH3 domain-binding protein 5-like (Sh3bp5l) from Mus musculus (Mouse).